A 142-amino-acid chain; its full sequence is Universal stress protein G (142 aa).

Belongs to the universal stress protein A family.

The chain is Universal stress protein G (uspG) from Shigella flexneri.